A 427-amino-acid polypeptide reads, in one-letter code: Glutamate-1-semialdehyde 2,1-aminomutase (427 aa).

N6-(pyridoxal phosphate)lysine is present on K265.

This sequence belongs to the class-III pyridoxal-phosphate-dependent aminotransferase family. HemL subfamily. Homodimer. Pyridoxal 5'-phosphate serves as cofactor.

The protein localises to the cytoplasm. It carries out the reaction (S)-4-amino-5-oxopentanoate = 5-aminolevulinate. It functions in the pathway porphyrin-containing compound metabolism; protoporphyrin-IX biosynthesis; 5-aminolevulinate from L-glutamyl-tRNA(Glu): step 2/2. The sequence is that of Glutamate-1-semialdehyde 2,1-aminomutase from Mannheimia succiniciproducens (strain KCTC 0769BP / MBEL55E).